The chain runs to 167 residues: UPF0114 protein Tola_1474 (167 aa).

4 helical membrane-spanning segments follow: residues 15–35, 53–73, 109–129, and 136–156; these read IMAP…IKFF, LILI…IVMV, VAAS…MNTE, and IKWY…MGYL.

The protein belongs to the UPF0114 family.

It is found in the cell membrane. This Tolumonas auensis (strain DSM 9187 / NBRC 110442 / TA 4) protein is UPF0114 protein Tola_1474.